Reading from the N-terminus, the 284-residue chain is Diaminopimelate epimerase (284 aa).

Residues Asn-20, Gln-53, and Asn-73 each coordinate substrate. Catalysis depends on Cys-82, which acts as the Proton donor. Residues 83–84 (GN), Asn-167, Asn-200, and 218–219 (ER) each bind substrate. Residue Cys-227 is the Proton acceptor of the active site. Residue 228-229 (GS) coordinates substrate.

Belongs to the diaminopimelate epimerase family. Homodimer.

It is found in the cytoplasm. It catalyses the reaction (2S,6S)-2,6-diaminopimelate = meso-2,6-diaminopimelate. It functions in the pathway amino-acid biosynthesis; L-lysine biosynthesis via DAP pathway; DL-2,6-diaminopimelate from LL-2,6-diaminopimelate: step 1/1. Catalyzes the stereoinversion of LL-2,6-diaminopimelate (L,L-DAP) to meso-diaminopimelate (meso-DAP), a precursor of L-lysine and an essential component of the bacterial peptidoglycan. This is Diaminopimelate epimerase from Xanthomonas euvesicatoria pv. vesicatoria (strain 85-10) (Xanthomonas campestris pv. vesicatoria).